A 172-amino-acid chain; its full sequence is C-phycocyanin beta chain (172 aa).

Residues Asn35, Asp39, Asn72, Arg77, Cys82, 82-88 (CLRDMEI), 149-151 (TIG), and Cys153 each bind (2R,3E)-phycocyanobilin. Position 72 is an N4-methylasparagine (Asn72).

This sequence belongs to the phycobiliprotein family. Heterodimer of an alpha and a beta subunit, which further assembles into trimers and the trimers into hexamers. The basic functional unit of phycobiliproteins is a ring-shaped hexamer formed from two back-to-back trimers contacting via the alpha chain subunits. The trimers are composed of alpha/beta subunit heterodimers arranged around a three-fold axis of symmetry. The phycoerythrins also contain a gamma subunit which is located in the center of the hexamer. In terms of processing, contains two covalently linked phycocyanobilin chromophores.

It is found in the plastid. The protein resides in the chloroplast thylakoid membrane. In terms of biological role, light-harvesting photosynthetic tetrapyrrole chromophore-protein from the phycobiliprotein complex (phycobilisome, PBS). Phycocyanin is the major phycobiliprotein in the PBS rod. The sequence is that of C-phycocyanin beta chain (cpcB) from Cyanidium caldarium (Red alga).